The primary structure comprises 146 residues: Anti-sigma F factor (146 aa).

This sequence belongs to the anti-sigma-factor family.

It catalyses the reaction L-seryl-[protein] + ATP = O-phospho-L-seryl-[protein] + ADP + H(+). It carries out the reaction L-threonyl-[protein] + ATP = O-phospho-L-threonyl-[protein] + ADP + H(+). Binds to sigma F and blocks its ability to form an RNA polymerase holoenzyme (E-sigma F). Phosphorylates SpoIIAA on a serine residue. This phosphorylation may enable SpoIIAA to act as an anti-anti-sigma factor that counteracts SpoIIAB and thus releases sigma F from inhibition. This chain is Anti-sigma F factor, found in Bacillus velezensis (strain DSM 23117 / BGSC 10A6 / LMG 26770 / FZB42) (Bacillus amyloliquefaciens subsp. plantarum).